The following is a 66-amino-acid chain: Nigrocin-2GRa (66 aa).

A signal peptide spans 1–22; the sequence is MFTLKKSQLLLFFPGTINLSLC. Residues 23–45 constitute a propeptide that is removed on maturation; that stretch reads QDETNAEEERRDEEVAKMEEIKR. Residues Cys60 and Cys66 are joined by a disulfide bond.

As to expression, expressed by the skin glands.

It is found in the secreted. Functionally, antimicrobial peptide active at least against the Gram-positive bacterium S.aureus but with otherwise unclear activity spectrum. Lacks hemolytic activity against rabbit or human erythrocytes. This chain is Nigrocin-2GRa, found in Odorrana grahami (Yunnanfu frog).